The sequence spans 72 residues: Prokaryotic ubiquitin-like protein Pup (72 aa).

Gly residues predominate over residues 1–10 (MATRDSGGGQ). The disordered stretch occupies residues 1 to 41 (MATRDSGGGQQRADRRAEEIDDVATEDTSASDLKERHEKLS). Positions 27-61 (DTSASDLKERHEKLSEDVDSLLDEIDDVLEENAEE) form a coiled coil. Positions 28–66 (TSASDLKERHEKLSEDVDSLLDEIDDVLEENAEEFVKGY) are ARC ATPase binding. Basic and acidic residues predominate over residues 32-41 (DLKERHEKLS). A Deamidated glutamine modification is found at Gln72. Residue Gln72 forms an Isoglutamyl lysine isopeptide (Gln-Lys) (interchain with K-? in acceptor proteins) linkage.

Belongs to the prokaryotic ubiquitin-like protein family. Strongly interacts with the proteasome-associated ATPase ARC through a hydrophobic interface; the interacting region of Pup lies in its C-terminal half. There is one Pup binding site per ARC hexamer ring. Post-translationally, is modified by deamidation of its C-terminal glutamine to glutamate by the deamidase Dop, a prerequisite to the subsequent pupylation process.

It functions in the pathway protein degradation; proteasomal Pup-dependent pathway. In terms of biological role, protein modifier that is covalently attached to lysine residues of substrate proteins, thereby targeting them for proteasomal degradation. The tagging system is termed pupylation. This is Prokaryotic ubiquitin-like protein Pup from Frankia casuarinae (strain DSM 45818 / CECT 9043 / HFP020203 / CcI3).